Consider the following 84-residue polypeptide: Conotoxin Am6.1 (84 aa).

The signal sequence occupies residues 1–19 (MEKLTILLLVAAVLMSTHA). Positions 20–47 (MFQGGGEKSRKAINFSETRKLARNKQKR) are excised as a propeptide. 3 disulfides stabilise this stretch: cysteine 48–cysteine 62, cysteine 55–cysteine 66, and cysteine 61–cysteine 71. A 6'-bromotryptophan; in Am6.1b modification is found at tryptophan 51. Residues glutamate 60 and glutamate 64 each carry the 4-carboxyglutamate; partial; in Am6.1b and Am6.1c modification. Residues 78–84 (RTTSHPI) constitute a propeptide that is removed on maturation.

Belongs to the conotoxin O2 family. In terms of processing, three forms of this peptides have been described. The unmodified Am6.1a (Am3286) is not detected in the venom; Am6.1b (Am3408) is only Trp brominated, while Am6.1c (Am3452) is both Trp brominated and Glu gamma-carboxyglutamated. Both Am6.1b and Am6.1c are detected in the venom. Expressed by the venom duct.

The protein resides in the secreted. In terms of biological role, gamma-conotoxins may act on voltage-gated non-specific cation pacemaker channels (HCN). The polypeptide is Conotoxin Am6.1 (Conus amadis (Amadis cone)).